Consider the following 176-residue polypeptide: Isopentenyl-diphosphate Delta-isomerase (176 aa).

The Mn(2+) site is built by His22 and His28. The 135-residue stretch at Leu26–Ile160 folds into the Nudix hydrolase domain. Residue Cys62 is part of the active site. His64 is a Mn(2+) binding site. Glu82 is a Mg(2+) binding site. Residues Glu108 and Glu110 each contribute to the Mn(2+) site. Residue Glu110 is part of the active site.

Belongs to the IPP isomerase type 1 family. Requires Mg(2+) as cofactor. Mn(2+) is required as a cofactor.

The protein resides in the cytoplasm. The catalysed reaction is isopentenyl diphosphate = dimethylallyl diphosphate. Its pathway is isoprenoid biosynthesis; dimethylallyl diphosphate biosynthesis; dimethylallyl diphosphate from isopentenyl diphosphate: step 1/1. It participates in porphyrin-containing compound metabolism; chlorophyll biosynthesis. Its function is as follows. Catalyzes the 1,3-allylic rearrangement of the homoallylic substrate isopentenyl (IPP) to its highly electrophilic allylic isomer, dimethylallyl diphosphate (DMAPP). The polypeptide is Isopentenyl-diphosphate Delta-isomerase (Dinoroseobacter shibae (strain DSM 16493 / NCIMB 14021 / DFL 12)).